The chain runs to 313 residues: Sorting nexin-20 (313 aa).

The interval 1–61 is disordered; sequence MASPQHPGGP…MTTRELQEHW (61 aa). Ser-3 is modified (phosphoserine). Pro residues predominate over residues 29–38; it reads PPGPDLPCPG. The span at 45 to 55 shows a compositional bias: polar residues; the sequence is GPTSNSNMTTR. The region spanning 71–188 is the PX domain; sequence VRLLFEIASA…DFLTRPELCE (118 aa). A 1,2-diacyl-sn-glycero-3-phospho-(1D-myo-inositol-3-phosphate) contacts are provided by Arg-113, Ser-115, Lys-140, and Arg-154.

Belongs to the sorting nexin family. As to quaternary structure, interacts with SELPLG. Interaction with SELPLG is controversial.

It is found in the early endosome membrane. It localises to the cell membrane. The protein resides in the cytoplasm. The protein localises to the nucleus. Its function is as follows. May play a role in cellular vesicle trafficking. Has been proposed to function as a sorting protein that targets SELPLG into endosomes, but has no effect on SELPLG internalization from the cell surface, or on SELPLG-mediated cell-cell adhesion. The sequence is that of Sorting nexin-20 (Snx20) from Rattus norvegicus (Rat).